The sequence spans 339 residues: MPTFELNKAIVQKAEQQQFDFALSMIKLRGFGGKTEFWDHNLESFTLMAGLAAVTSRIQIYATAATLTLPPAIVARMASTIDSISGGRFGVNLVTGWQKPEYEQMGLWPGDDYFSRRYDYLTEYVHVLRDLWDTGRSDFKGDYFTMNDCRVSPRPQQPMKVICAGQSDAGMAFSAQHADYNFCFGKGVNTPAAFAPTAARMKAAAEKAGRDVGSYVLFMVIADETDEAARAKWEHYKAGADEEALSWLTEQSQKDTRSGADTNVRQMADPTSAVNINMGTLVGSYASVARMLDEVAAVPGTEGVLLTFDDFLTGIDAFGEHIQPLMRCRDHLRVTQEVA.

FMN contacts are provided by residues 26 to 27 (IK), Asn-92, Glu-101, 117 to 118 (RY), and Ser-167.

The protein belongs to the NtaA/SnaA/DszA monooxygenase family. RutA subfamily.

The catalysed reaction is uracil + FMNH2 + NADH + O2 = (Z)-3-ureidoacrylate + FMN + NAD(+) + H2O + H(+). It carries out the reaction thymine + FMNH2 + NADH + O2 = (Z)-2-methylureidoacrylate + FMN + NAD(+) + H2O + H(+). Catalyzes the pyrimidine ring opening between N-3 and C-4 by an unusual flavin hydroperoxide-catalyzed mechanism, adding oxygen atoms in the process to yield ureidoacrylate peracid, that immediately reacts with FMN forming ureidoacrylate and FMN-N(5)-oxide. The FMN-N(5)-oxide reacts spontaneously with NADH to produce FMN. Requires the flavin reductase RutF to regenerate FMN in vivo. This Cronobacter sakazakii (strain ATCC BAA-894) (Enterobacter sakazakii) protein is Pyrimidine monooxygenase RutA.